The primary structure comprises 138 residues: Fusaristatin A biosynthesis cluster protein FGSG_08206 (138 aa).

Positions valine 33–phenylalanine 130 constitute a Stress-response A/B barrel domain.

It functions in the pathway secondary metabolite biosynthesis. Part of the gene cluster that mediates the biosynthesis of the lipopeptide fusaristatin A. Fusaristatin A consists of a polyketide chain linked to three amino acid residues glutamine (Gln), dehydroalanine (dehydro-Ala), and beta-aminoisobutyric acid. The biosynthesis starts with formation of a linear polyketide chain by the highly reducing polyketide synthase PKS6. The gene cluster does not contain an acyl-CoA ligase or an acyl-transferase, and it is therefore predicted that the polyketide is transferred directly to the nonribosomal peptide synthetase NRPS7. Modules 1-3 from NRPS7 incorporate dehydro-Ala, Gln, and beta-aminoisobutyric acid in the compound, which is released by cyclization. The beta-aminoisobutyric acid units are most likely not freely available to the NRPS, but can be synthesized from thymine, which requires a dehydrogenase, a monooxygenase, and an aminotransferase. The fusaristatin A cluster contains a cytochrome P450 monooxygenase (FGSG_08207) and an aminotransferase (FGSG_17085), which theoretically can perform two of the enzymatic steps. The enzymes may however also be involved in biosynthesis of dehydroalanine or modification of the polyketide. The dehydro-Ala residue can be a result of cyclization, where serine is dehydrated. The last gene of the cluster encodes a protein with an A/B barrel domain found in variable enzymes, which hampers functional prediction. This is Fusaristatin A biosynthesis cluster protein FGSG_08206 from Gibberella zeae (strain ATCC MYA-4620 / CBS 123657 / FGSC 9075 / NRRL 31084 / PH-1) (Wheat head blight fungus).